The sequence spans 152 residues: Acidic phospholipase A2 S16-19 (152 aa).

The first 19 residues, 1–19 (MYPAHLLVLLAVCVSLLGA), serve as a signal peptide directing secretion. A propeptide spanning residues 20–27 (SNIPLPSL) is cleaved from the precursor. Disulfide bonds link C38–C104, C54–C151, C71–C132, C78–C125, C88–C118, and C111–C123. Residues Y55, G57, and G59 each contribute to the Ca(2+) site. Residue H75 is part of the active site. D76 is a Ca(2+) binding site. The active site involves D126.

This sequence belongs to the phospholipase A2 family. Group I subfamily. D49 sub-subfamily. It depends on Ca(2+) as a cofactor. Post-translationally, this enzyme lacks one of the seven disulfide bonds found in similar PLA2 proteins. Expressed by the venom gland.

It localises to the secreted. The catalysed reaction is a 1,2-diacyl-sn-glycero-3-phosphocholine + H2O = a 1-acyl-sn-glycero-3-phosphocholine + a fatty acid + H(+). Snake venom phospholipase A2 (PLA2) that inhibits collagen-induced platelet aggregation. PLA2 catalyzes the calcium-dependent hydrolysis of the 2-acyl groups in 3-sn-phosphoglycerides. The polypeptide is Acidic phospholipase A2 S16-19 (Austrelaps superbus (Lowland copperhead snake)).